The sequence spans 620 residues: 1-deoxy-D-xylulose-5-phosphate synthase (620 aa).

Thiamine diphosphate is bound by residues His80 and Gly121–Ser123. Asp152 serves as a coordination point for Mg(2+). Residues Gly153–Ala154, Asn181, Tyr288, and Glu370 each bind thiamine diphosphate. Asn181 is a binding site for Mg(2+).

It belongs to the transketolase family. DXPS subfamily. Homodimer. Mg(2+) is required as a cofactor. It depends on thiamine diphosphate as a cofactor.

The enzyme catalyses D-glyceraldehyde 3-phosphate + pyruvate + H(+) = 1-deoxy-D-xylulose 5-phosphate + CO2. Its pathway is metabolic intermediate biosynthesis; 1-deoxy-D-xylulose 5-phosphate biosynthesis; 1-deoxy-D-xylulose 5-phosphate from D-glyceraldehyde 3-phosphate and pyruvate: step 1/1. Its function is as follows. Catalyzes the acyloin condensation reaction between C atoms 2 and 3 of pyruvate and glyceraldehyde 3-phosphate to yield 1-deoxy-D-xylulose-5-phosphate (DXP). The polypeptide is 1-deoxy-D-xylulose-5-phosphate synthase (Photobacterium profundum (strain SS9)).